Consider the following 307-residue polypeptide: Cytochrome c1, heme protein, mitochondrial (307 aa).

The transit peptide at 1 to 56 directs the protein to the mitochondrion; sequence MFQFVKKKNEFLKFARLGSRAFTQNAQKTHSKGSNIALVSSSLLSVGMIALYYNVY. Residues 57 to 269 lie on the Mitochondrial intermembrane side of the membrane; that stretch reads GPSLSAGTPK…EPELDIRKKM (213 aa). Residues 89–259 enclose the Cytochrome c domain; sequence ASLRRGFQVY…DVVNFLHWAS (171 aa). Residues cysteine 102, cysteine 105, histidine 106, and methionine 225 each coordinate heme c. The helical transmembrane segment at 270–287 threads the bilayer; the sequence is GFQVITVLTILTALSMWY. The Mitochondrial matrix portion of the chain corresponds to 288-307; it reads KRFKWTPIKNRKIFYQRPIK.

Belongs to the cytochrome c family. In terms of assembly, component of the ubiquinol-cytochrome c oxidoreductase (cytochrome b-c1 complex, complex III, CIII), a multisubunit enzyme composed of 3 respiratory subunits cytochrome b, cytochrome c1 and Rieske protein, 2 core protein subunits, and additional low-molecular weight protein subunits. The complex exists as an obligatory dimer and forms supercomplexes (SCs) in the inner mitochondrial membrane with cytochrome c oxidase (complex IV, CIV). Heme c is required as a cofactor.

It is found in the mitochondrion inner membrane. The enzyme catalyses a quinol + 2 Fe(III)-[cytochrome c](out) = a quinone + 2 Fe(II)-[cytochrome c](out) + 2 H(+)(out). Component of the ubiquinol-cytochrome c oxidoreductase, a multisubunit transmembrane complex that is part of the mitochondrial electron transport chain which drives oxidative phosphorylation. The respiratory chain contains 3 multisubunit complexes succinate dehydrogenase (complex II, CII), ubiquinol-cytochrome c oxidoreductase (cytochrome b-c1 complex, complex III, CIII) and cytochrome c oxidase (complex IV, CIV), that cooperate to transfer electrons derived from NADH and succinate to molecular oxygen, creating an electrochemical gradient over the inner membrane that drives transmembrane transport and the ATP synthase. The cytochrome b-c1 complex catalyzes electron transfer from ubiquinol to cytochrome c, linking this redox reaction to translocation of protons across the mitochondrial inner membrane, with protons being carried across the membrane as hydrogens on the quinol. In the process called Q cycle, 2 protons are consumed from the matrix, 4 protons are released into the intermembrane space and 2 electrons are passed to cytochrome c. Cytochrome c1 is a catalytic core subunit containing a c-type heme. It transfers electrons from the [2Fe-2S] iron-sulfur cluster of the Rieske protein to cytochrome c. The polypeptide is Cytochrome c1, heme protein, mitochondrial (cyt1) (Schizosaccharomyces pombe (strain 972 / ATCC 24843) (Fission yeast)).